Reading from the N-terminus, the 135-residue chain is 30 kDa antigenic glycoprotein (135 aa).

Positions 1–5 (GNTYS) are cleaved as a signal peptide. 4 N-linked (GlcNAc...) asparagine glycosylation sites follow: Asn-22, Asn-31, Asn-57, and Asn-73.

To H.contortus 15 kDa excretory/secretory protein.

The protein resides in the secreted. This Trichostrongylus colubriformis (Black scour worm) protein is 30 kDa antigenic glycoprotein.